We begin with the raw amino-acid sequence, 89 residues long: Small ribosomal subunit protein uS15 (89 aa).

It belongs to the universal ribosomal protein uS15 family. In terms of assembly, part of the 30S ribosomal subunit. Forms a bridge to the 50S subunit in the 70S ribosome, contacting the 23S rRNA.

In terms of biological role, one of the primary rRNA binding proteins, it binds directly to 16S rRNA where it helps nucleate assembly of the platform of the 30S subunit by binding and bridging several RNA helices of the 16S rRNA. Forms an intersubunit bridge (bridge B4) with the 23S rRNA of the 50S subunit in the ribosome. This is Small ribosomal subunit protein uS15 from Mycobacterium leprae (strain Br4923).